We begin with the raw amino-acid sequence, 377 residues long: Geranylgeranyl transferase type-1 subunit beta (377 aa).

PFTB repeat units follow at residues 144-186 (KEAC…YMLN), 193-234 (MKKA…CLMG), 245-284 (LNRIKRWCIMRQQNGYHGRPNKPVDTCYSFWVGATLKLLK), and 291-333 (FEKN…SLME). Residues 219-221 (HGG) and 263-266 (RPNK) each bind geranylgeranyl diphosphate. Residues aspartate 269 and cysteine 271 each contribute to the Zn(2+) site. 272 to 275 (YSFW) is a geranylgeranyl diphosphate binding site. Histidine 321 contacts Zn(2+).

The protein belongs to the protein prenyltransferase subunit beta family. As to quaternary structure, heterodimer of FNTA and PGGT1B. PGGT1B mediates interaction with substrate peptides. Requires Zn(2+) as cofactor. The cofactor is Mg(2+).

It catalyses the reaction geranylgeranyl diphosphate + L-cysteinyl-[protein] = S-geranylgeranyl-L-cysteinyl-[protein] + diphosphate. Its function is as follows. Catalyzes the transfer of a geranyl-geranyl moiety from geranyl-geranyl pyrophosphate to a cysteine at the fourth position from the C-terminus of proteins having the C-terminal sequence Cys-aliphatic-aliphatic-X. Known substrates include RAC1, RAC2, RAP1A and RAP1B. This Homo sapiens (Human) protein is Geranylgeranyl transferase type-1 subunit beta (PGGT1B).